Consider the following 1621-residue polypeptide: Lysophospholipase NTE1 (1621 aa).

Residues 1-12 lie on the Cytoplasmic side of the membrane; the sequence is MSSIPTPPDANG. A helical membrane pass occupies residues 13–33; it reads NPLIALAVAVIYAILYVLQGV. The Lumenal segment spans residues 34 to 59; sequence KYGVSLLTIGIPSCIVRMLQYSLTIS. Residues 60-80 traverse the membrane as a helical segment; that stretch reads LGFPHLLALFAGALLALFFLI. Residues 81-1621 lie on the Cytoplasmic side of the membrane; that stretch reads RYRYLTRYAQ…RGNRLRRMSI (1541 aa). Disordered stretches follow at residues 188 to 209, 250 to 379, 545 to 566, 648 to 667, 711 to 735, 772 to 791, and 839 to 870; these read PDASSQGTPTPSSDTNSPTRPS, EGEE…SVPR, QTATTTVKNEPLNGGSSPLDET, WNLNDSPHTDGQPVDPQRDD, VSALSTPNSPMFPPNAGTPLQGSTR, DDEASSISMSLHDSQGGASG, and FRSTSSNQENPNSTPGSKHRQSSFGSSNERPF. Low complexity-rich tracts occupy residues 195-209 and 348-361; these read TPTPSSDTNSPTRPS and RRSQSLRSSPRLNS. Residues 788 to 907 and 951 to 1070 contribute to the a nucleoside 3',5'-cyclic phosphate site; these read GASG…GYLS and RLLS…IAGR. A compositionally biased stretch (polar residues) spans 839–867; the sequence is FRSTSSNQENPNSTPGSKHRQSSFGSSNE. The PNPLA domain maps to 1316 to 1480; the sequence is LVLGGGGARG…MDNTPIQPLR (165 aa). The short motif at 1320–1325 is the GXGXXG element; that stretch reads GGGARG. A GXSXG motif is present at residues 1347-1351; sequence GCSIG. S1349 serves as the catalytic Nucleophile. D1467 serves as the catalytic Proton acceptor. Positions 1467 to 1469 match the DGA/G motif; sequence DGG.

Belongs to the NTE family.

Its subcellular location is the endoplasmic reticulum membrane. It catalyses the reaction a 1-acyl-sn-glycero-3-phosphocholine + H2O = sn-glycerol 3-phosphocholine + a fatty acid + H(+). Inhibited by organophosphorus esters. Its function is as follows. Intracellular phospholipase B that catalyzes the double deacylation of phosphatidylcholine (PC) to glycerophosphocholine (GroPCho). Plays an important role in membrane lipid homeostasis. Responsible for the rapid PC turnover in response to inositol, elevated temperatures, or when choline is present in the growth medium. This chain is Lysophospholipase NTE1 (NTE1), found in Cryptococcus neoformans var. neoformans serotype D (strain B-3501A) (Filobasidiella neoformans).